A 150-amino-acid chain; its full sequence is Arginine repressor (150 aa).

It belongs to the ArgR family.

It localises to the cytoplasm. It functions in the pathway amino-acid biosynthesis; L-arginine biosynthesis [regulation]. Regulates arginine biosynthesis genes. This chain is Arginine repressor, found in Clostridium botulinum (strain Eklund 17B / Type B).